An 856-amino-acid chain; its full sequence is DNA mismatch repair protein MutS (856 aa).

607 to 614 (GPNMSGKS) contributes to the ATP binding site.

The protein belongs to the DNA mismatch repair MutS family.

Functionally, this protein is involved in the repair of mismatches in DNA. It is possible that it carries out the mismatch recognition step. This protein has a weak ATPase activity. The chain is DNA mismatch repair protein MutS from Lactobacillus delbrueckii subsp. bulgaricus (strain ATCC BAA-365 / Lb-18).